The sequence spans 345 residues: Phosphoribosylformylglycinamidine cyclo-ligase (345 aa).

The protein belongs to the AIR synthase family.

The protein resides in the cytoplasm. It carries out the reaction 2-formamido-N(1)-(5-O-phospho-beta-D-ribosyl)acetamidine + ATP = 5-amino-1-(5-phospho-beta-D-ribosyl)imidazole + ADP + phosphate + H(+). It participates in purine metabolism; IMP biosynthesis via de novo pathway; 5-amino-1-(5-phospho-D-ribosyl)imidazole from N(2)-formyl-N(1)-(5-phospho-D-ribosyl)glycinamide: step 2/2. In Aeromonas hydrophila subsp. hydrophila (strain ATCC 7966 / DSM 30187 / BCRC 13018 / CCUG 14551 / JCM 1027 / KCTC 2358 / NCIMB 9240 / NCTC 8049), this protein is Phosphoribosylformylglycinamidine cyclo-ligase.